Consider the following 321-residue polypeptide: Ribonuclease Z (321 aa).

Zn(2+) contacts are provided by His-62, His-64, Asp-66, His-67, His-139, Asp-209, and His-268. Asp-66 serves as the catalytic Proton acceptor.

Belongs to the RNase Z family. Homodimer. It depends on Zn(2+) as a cofactor.

The enzyme catalyses Endonucleolytic cleavage of RNA, removing extra 3' nucleotides from tRNA precursor, generating 3' termini of tRNAs. A 3'-hydroxy group is left at the tRNA terminus and a 5'-phosphoryl group is left at the trailer molecule.. Zinc phosphodiesterase, which displays some tRNA 3'-processing endonuclease activity. Probably involved in tRNA maturation, by removing a 3'-trailer from precursor tRNA. This is Ribonuclease Z from Pseudomonas putida (strain W619).